Here is a 651-residue protein sequence, read N- to C-terminus: E3 SUMO-protein ligase PIAS1 (651 aa).

An N-acetylalanine modification is found at alanine 2. Residues 2 to 200 form a required for interaction with MSX1 region; sequence ADSAELKQMV…KCDFTVQVQL (199 aa). Residues 11-45 form the SAP domain; the sequence is VMSLRVSELQVLLGYAGRNKHGRKHELLTKALHLL. The LXXLL motif signature appears at 19–23; the sequence is LQVLL. Glycyl lysine isopeptide (Lys-Gly) (interchain with G-Cter in SUMO2) cross-links involve residues lysine 40 and lysine 46. Residues 56 to 64 carry the Nuclear localization signal motif; that stretch reads KIKELYRRR. A PINIT domain is found at 124–288; it reads HLTSALHPVH…SMAVYLVKQL (165 aa). Residues lysine 137 and lysine 238 each participate in a glycyl lysine isopeptide (Lys-Gly) (interchain with G-Cter in SUMO2) cross-link. Residues 320-405 form an SP-RING-type zinc finger; that stretch reads PDSEIATTSL…LKYCTDCDEI (86 aa). 4 residues coordinate Zn(2+): cysteine 351, histidine 353, cysteine 374, and cysteine 377. A Nuclear localization signal motif is present at residues 368–380; it reads KKPTWVCPVCDKK. A Glycyl lysine isopeptide (Lys-Gly) (interchain with G-Cter in SUMO2) cross-link involves residue lysine 453. The SUMO1-binding stretch occupies residues 462 to 473; that stretch reads LTIDSSSDEEEE. A disordered region spans residues 465–511; that stretch reads DSSSDEEEEEPSAKRTCPSLSPTSPLNNKGILSLPHQASPVSRTPSL. Phosphoserine occurs at positions 467, 468, 483, and 485. Positions 482-491 are enriched in polar residues; the sequence is PSLSPTSPLN. The residue at position 487 (threonine 487) is a Phosphothreonine. Serine 488 carries the phosphoserine modification. Lysine 493 is covalently cross-linked (Glycyl lysine isopeptide (Lys-Gly) (interchain with G-Cter in SUMO2)). 3 positions are modified to phosphoserine: serine 503, serine 510, and serine 522. Repeat copies occupy residues 520–523 and 557–560. Positions 520 to 615 are 4 X 4 AA repeats of N-T-S-L; it reads NTSLIQDYRH…GSSSGSNSSL (96 aa). The stretch at 598 to 601 is one 3; approximate repeat; the sequence is STSL. The span at 599–621 shows a compositional bias: low complexity; the sequence is TSLPTTNGSSSGSNSSLVSSNSL. Positions 599 to 632 are disordered; sequence TSLPTTNGSSSGSNSSLVSSNSLRESHSHTVTNR. One copy of the 4; approximate repeat lies at 612 to 615; that stretch reads NSSL.

Belongs to the PIAS family. In terms of assembly, interacts with NCOA2 and AR. Interacts with NR2C1; the interaction promotes its sumoylation. Interacts with DDX21, CSRP2, AXIN1, JUN, UBE2I, SUMO1, SATB2, PLAG1, TP53 and STAT1 (dimer), following IFNA1-stimulation. Interacts with SP3 (preferentially when SUMO-modified). Interacts with KLF8; the interaction results in SUMO ligation and repression of KLF8 transcriptional activity and of its cell cycle progression into G(1) phase. Interacts with CHUK/IKKA; this interaction induces PIAS1 phosphorylation. Interacts with PTK2/FAK1; the interaction promotes its sumoylation. Interacts with DDX5. Interacts with PML. Interacts with MTA1. Interacts with SUMO1P1/SUMO5. Interacts with PRDM1/Blimp-1. Interacts (via N-terminus) with MSX1 (via C-terminus); the interaction is required for the localization of both proteins to the nuclear periphery and specific binding of MSX1 to the core enhancer region in target gene promoters. (Microbial infection) Interacts with ebolavirus VP35; this interaction mediates the sumoylation of IRF7 and contributes to the viral inhibition of IFN-type I production. Post-translationally, sumoylated. As to expression, expressed in numerous tissues with highest level in testis.

The protein localises to the nucleus. The protein resides in the nucleus speckle. It localises to the PML body. It is found in the cytoplasm. Its subcellular location is the cytoskeleton. It functions in the pathway protein modification; protein sumoylation. Functionally, functions as an E3-type small ubiquitin-like modifier (SUMO) ligase, stabilizing the interaction between UBE2I and the substrate, and as a SUMO-tethering factor. Catalyzes sumoylation of various proteins, such as CEBPB, MRE11, MTA1, PTK2 and PML. Plays a crucial role as a transcriptional coregulation in various cellular pathways, including the STAT pathway, the p53 pathway and the steroid hormone signaling pathway. In vitro, binds A/T-rich DNA. The effects of this transcriptional coregulation, transactivation or silencing, may vary depending upon the biological context. Mediates sumoylation of MRE11, stabilizing MRE11 on chromatin during end resection. Sumoylates PML (at 'Lys-65' and 'Lys-160') and PML-RAR and promotes their ubiquitin-mediated degradation. PIAS1-mediated sumoylation of PML promotes its interaction with CSNK2A1/CK2 which in turn promotes PML phosphorylation and degradation. Enhances the sumoylation of MTA1 and may participate in its paralog-selective sumoylation. Plays a dynamic role in adipogenesis by promoting the SUMOylation and degradation of CEBPB. Mediates the nuclear mobility and localization of MSX1 to the nuclear periphery, whereby MSX1 is brought into the proximity of target myoblast differentiation factor genes. Also required for the binding of MSX1 to the core enhancer region in target gene promoter regions, independent of its sumoylation activity. Capable of binding to the core enhancer region TAAT box in the MYOD1 gene promoter. In terms of biological role, (Microbial infection) Restricts Epstein-Barr virus (EBV) lytic replication by acting as an inhibitor for transcription factors involved in lytic gene expression. The virus can use apoptotic caspases to antagonize PIAS1-mediated restriction and express its lytic genes. The sequence is that of E3 SUMO-protein ligase PIAS1 (PIAS1) from Homo sapiens (Human).